The sequence spans 432 residues: Anaerobic glycerol-3-phosphate dehydrogenase subunit B (432 aa).

This sequence belongs to the anaerobic G-3-P dehydrogenase subunit B family. As to quaternary structure, composed of a catalytic GlpA/B dimer and of membrane bound GlpC. FMN is required as a cofactor.

The catalysed reaction is a quinone + sn-glycerol 3-phosphate = dihydroxyacetone phosphate + a quinol. It participates in polyol metabolism; glycerol degradation via glycerol kinase pathway; glycerone phosphate from sn-glycerol 3-phosphate (anaerobic route): step 1/1. In terms of biological role, conversion of glycerol 3-phosphate to dihydroxyacetone. Uses fumarate or nitrate as electron acceptor. This chain is Anaerobic glycerol-3-phosphate dehydrogenase subunit B, found in Haemophilus influenzae (strain PittGG).